The sequence spans 331 residues: UDP-glucose 4-epimerase (331 aa).

Residues 11–12 (YI), 31–36 (DNLITG), 51–52 (DI), 73–77 (FAAFS), N92, T117, Y141, K145, and F169 contribute to the NAD(+) site. The substrate site is built by T117 and Y141. The active-site Proton acceptor is Y141. Substrate contacts are provided by residues N170, 189-190 (HI), 206-208 (QIY), R221, and 282-285 (RAGD).

This sequence belongs to the NAD(P)-dependent epimerase/dehydratase family. As to quaternary structure, homodimer. It depends on NAD(+) as a cofactor.

It catalyses the reaction UDP-alpha-D-glucose = UDP-alpha-D-galactose. It participates in carbohydrate metabolism; galactose metabolism. The protein is UDP-glucose 4-epimerase (galE) of Lacticaseibacillus casei (Lactobacillus casei).